Here is a 309-residue protein sequence, read N- to C-terminus: Ribonuclease Z (309 aa).

Zn(2+)-binding residues include histidine 63, histidine 65, aspartate 67, histidine 68, histidine 145, aspartate 216, and histidine 274. Catalysis depends on aspartate 67, which acts as the Proton acceptor.

The protein belongs to the RNase Z family. In terms of assembly, homodimer. Zn(2+) is required as a cofactor.

The catalysed reaction is Endonucleolytic cleavage of RNA, removing extra 3' nucleotides from tRNA precursor, generating 3' termini of tRNAs. A 3'-hydroxy group is left at the tRNA terminus and a 5'-phosphoryl group is left at the trailer molecule.. Zinc phosphodiesterase, which displays some tRNA 3'-processing endonuclease activity. Probably involved in tRNA maturation, by removing a 3'-trailer from precursor tRNA. This Streptococcus thermophilus (strain CNRZ 1066) protein is Ribonuclease Z.